The chain runs to 106 residues: UPF0235 protein OCAR_4310/OCA5_c02140 (106 aa).

It belongs to the UPF0235 family.

This is UPF0235 protein OCAR_4310/OCA5_c02140 from Afipia carboxidovorans (strain ATCC 49405 / DSM 1227 / KCTC 32145 / OM5) (Oligotropha carboxidovorans).